The chain runs to 602 residues: Spermidine-citrate ligase (602 aa).

Residues 286-288, lysine 300, and arginine 312 contribute to the ATP site; that span reads SLR.

The protein belongs to the IucA/IucC family.

It catalyses the reaction spermidine + citrate + ATP = N(8)-citryl-spermidine + AMP + diphosphate + H(+). The protein operates within siderophore biosynthesis; petrobactin biosynthesis. Involved in the biosynthesis of petrobactin, a catecholate siderophore that functions in both iron acquisition and virulence. Catalyzes the ATP-dependent condensation of citric acid and spermidine to form N(8)-citryl-spermidine. It can also catalyze the condensation of several di- and triamine analogs of spermidine with citric acid and the condensation of the citric acid analog tricarballylic acid with spermidine. Required for growth in iron-depleted medium and for full virulence in a mouse model of infection. The sequence is that of Spermidine-citrate ligase from Bacillus anthracis.